Reading from the N-terminus, the 147-residue chain is Large-conductance mechanosensitive channel (147 aa).

2 helical membrane-spanning segments follow: residues 8-28 and 81-101; these read FIMK…AAFG and GIFL…FMII.

This sequence belongs to the MscL family. In terms of assembly, homopentamer.

It is found in the cell inner membrane. In terms of biological role, channel that opens in response to stretch forces in the membrane lipid bilayer. May participate in the regulation of osmotic pressure changes within the cell. This Trichlorobacter lovleyi (strain ATCC BAA-1151 / DSM 17278 / SZ) (Geobacter lovleyi) protein is Large-conductance mechanosensitive channel.